Reading from the N-terminus, the 339-residue chain is Ketol-acid reductoisomerase (NADP(+)) (339 aa).

The KARI N-terminal Rossmann domain maps to 1–182 (MRVYYDRDAD…GGGRAGIIET (182 aa)). Residues 24–27 (YGSQ), arginine 48, serine 51, serine 53, and 83–86 (DELQ) contribute to the NADP(+) site. Residue histidine 108 is part of the active site. Glycine 134 contributes to the NADP(+) binding site. The KARI C-terminal knotted domain occupies 183 to 328 (TFKEECETDL…ARLRDMMPWI (146 aa)). 4 residues coordinate Mg(2+): aspartate 191, glutamate 195, glutamate 227, and glutamate 231. Residue serine 252 participates in substrate binding.

It belongs to the ketol-acid reductoisomerase family. Mg(2+) is required as a cofactor.

The enzyme catalyses (2R)-2,3-dihydroxy-3-methylbutanoate + NADP(+) = (2S)-2-acetolactate + NADPH + H(+). It carries out the reaction (2R,3R)-2,3-dihydroxy-3-methylpentanoate + NADP(+) = (S)-2-ethyl-2-hydroxy-3-oxobutanoate + NADPH + H(+). The protein operates within amino-acid biosynthesis; L-isoleucine biosynthesis; L-isoleucine from 2-oxobutanoate: step 2/4. It participates in amino-acid biosynthesis; L-valine biosynthesis; L-valine from pyruvate: step 2/4. Involved in the biosynthesis of branched-chain amino acids (BCAA). Catalyzes an alkyl-migration followed by a ketol-acid reduction of (S)-2-acetolactate (S2AL) to yield (R)-2,3-dihydroxy-isovalerate. In the isomerase reaction, S2AL is rearranged via a Mg-dependent methyl migration to produce 3-hydroxy-3-methyl-2-ketobutyrate (HMKB). In the reductase reaction, this 2-ketoacid undergoes a metal-dependent reduction by NADPH to yield (R)-2,3-dihydroxy-isovalerate. This Bradyrhizobium sp. (strain ORS 278) protein is Ketol-acid reductoisomerase (NADP(+)).